Consider the following 500-residue polypeptide: Serine/threonine protein phosphatase 2A 57 kDa regulatory subunit B' kappa isoform (500 aa).

The interval 1-53 (MFKQFLSKLPRKSSKSDSGELNRSSSGPVSSPVQRSGTSGGGSGPVRSNSGKR) is disordered. The span at 21 to 37 (LNRSSSGPVSSPVQRSG) shows a compositional bias: polar residues.

The protein belongs to the phosphatase 2A regulatory subunit B56 family. As to quaternary structure, PP2A consists of a common heteromeric enzyme, composed of a catalytic subunit (subunits C), a constant regulatory subunit (subunit A), and a variety of regulatory subunits such as subunits B (the R2/B/PR55/B55, R3/B''/PR72/PR130/PR59 and R5/B'/B56 families).

It localises to the cytoplasm. The B regulatory subunit may modulate substrate selectivity and catalytic activity, and may also direct the localization of the catalytic enzyme to a particular subcellular compartment. This chain is Serine/threonine protein phosphatase 2A 57 kDa regulatory subunit B' kappa isoform (B'KAPPA), found in Arabidopsis thaliana (Mouse-ear cress).